Consider the following 438-residue polypeptide: C4-dicarboxylate transport protein 1 (438 aa).

Transmembrane regions (helical) follow at residues 20 to 42 (LYVQVLIAILIGAMVGCLWPSVA), 57 to 77 (LIKMVIAPIIFCTVTSGIAHI), 90 to 112 (ALFYFEIVSSFALLLGLAMGNLV), 160 to 179 (VLQVLLFAILFGFSLMALGK), 192 to 214 (AHAVFGVIAIVMKAAPIGAFGAM), 229 to 251 (LIGLIALFYVTAALFVVVVLGLI), 324 to 346 (LFIAQALGVDLSFGQQLTILLVA), and 361 to 383 (FITLAATLSVVNPALVPGMAIVF).

It belongs to the dicarboxylate/amino acid:cation symporter (DAACS) (TC 2.A.23) family.

Its subcellular location is the cell inner membrane. In terms of biological role, responsible for the transport of dicarboxylates such as succinate, fumarate, and malate from the periplasm across the membrane. The protein is C4-dicarboxylate transport protein 1 of Bradyrhizobium diazoefficiens (strain JCM 10833 / BCRC 13528 / IAM 13628 / NBRC 14792 / USDA 110).